The following is a 138-amino-acid chain: Putative pre-16S rRNA nuclease (138 aa).

It belongs to the YqgF nuclease family.

The protein localises to the cytoplasm. Functionally, could be a nuclease involved in processing of the 5'-end of pre-16S rRNA. This Salmonella typhimurium (strain LT2 / SGSC1412 / ATCC 700720) protein is Putative pre-16S rRNA nuclease.